Reading from the N-terminus, the 956-residue chain is Calsyntenin-3 (956 aa).

A signal peptide spans 1-19; the sequence is MTLLLLPLLLASLLASCSC. Over 1–30 the chain is Cytoplasmic; sequence MTLLLLPLLLASLLASCSCNKANKHKPWIE. Over 20–847 the chain is Extracellular; that stretch reads NKANKHKPWI…SHRNSMIPSA (828 aa). Cadherin domains are found at residues 29 to 145 and 146 to 246; these read IEAE…APVF and VERL…KPSW. The helical intramembrane region spans 31–51; sequence AEYQGIVMENDNTVLLNPPLF. Residues 52 to 71 lie on the Cytoplasmic side of the membrane; sequence ALDKDAPLRYAGEICGFRLH. The segment at residues 72–94 is an intramembrane region (helical); the sequence is GSGVPFEAVILDKATGEGLIRAK. Topologically, residues 95 to 151 are cytoplasmic; sequence EPVDCEAQKEHTFTIQAYDCGEGPDGANTKKSHKATVHVRVNDVNEFAPVFVERLYR. Residues 152-172 constitute an intramembrane region (helical); it reads AAVTEGKLYDRILRVEAIDGD. Residues 173 to 255 lie on the Cytoplasmic side of the membrane; that stretch reads CSPQYSQICY…WQGWNKRIEY (83 aa). Residues 256–276 traverse the membrane as a helical segment; it reads APGAGSLALFPGIRLETCDEP. The Lumenal portion of the chain corresponds to 277–364; the sequence is LWNIQATIEL…PLGGPSGLGS (88 aa). Asn-299, Asn-327, Asn-347, Asn-507, and Asn-740 each carry an N-linked (GlcNAc...) asparagine glycan. The chain crosses the membrane as a helical span at residues 848–868; it reads ATLIIVVCVGFLVLMVVLGLV. The Cytoplasmic segment spans residues 869–956; it reads RIHSLHRRVS…RIIETPPHRY (88 aa). Residues 916–956 are disordered; it reads QSCVTGAVGGQQEDEDSSDSEVADSPSSDERRIIETPPHRY. Residues 927–937 are compositionally biased toward acidic residues; the sequence is QEDEDSSDSEV. Over residues 943–956 the composition is skewed to basic and acidic residues; it reads SDERRIIETPPHRY.

It belongs to the calsyntenin family. As to quaternary structure, interacts (via cadherin domains) with both alpha and beta isoforms of neurexins (NRXN1, NRXN2 and NRXN3). Directly interacts with APBA2. Forms a tripartite complex with APBA2 and APP. Interacts with low affinity with KLC1. Interacts with SLC23A2/SVCT2. In terms of assembly, interacts with CIDEA; inhibiting the lipid transferase activity of CIDEA. Interacts with CIDEC; inhibiting the lipid transferase activity of CIDEC. Proteolytically processed under normal cellular conditions. A primary zeta-cleavage generates a large extracellular (soluble) N-terminal domain (sAlc) and a short C-terminal transmembrane fragment (CTF1). A secondary cleavage catalyzed by gamma-secretase within the transmembrane domain releases the beta-Alc-beta chain in the extracellular milieu and produces an intracellular fragment (AlcICD). This processing is strongly suppressed in the tripartite complex formed with APBA2 and APP, which seems to prevent the association with gamma-secretase. In terms of processing, ubiquitinated: endoplasmic reticulum-localized protein is ubiquitinated and degraded by the endoplasmic reticulum-associated degradation (ERAD) pathway. According to PubMed:12498782, expressed predominantly in the brain and in kidney. Low levels in heart, skeletal muscle, liver, placenta, pancreas and lung. According to PubMed:12972431, predominant expression in brain, and only marginal in kidney. In brain, present throughout all cortical layers, highest levels in GABAergic neurons (based on morphology and distribution pattern). In terms of tissue distribution, expression is restricted to adipose tissue, with high expression in multilocular thermogenic adipocytes (brown adipose tissue).

It localises to the postsynaptic cell membrane. Its subcellular location is the endoplasmic reticulum membrane. The protein resides in the golgi apparatus membrane. The protein localises to the cell projection. It is found in the dendrite. It localises to the lipid droplet. In terms of biological role, postsynaptic adhesion molecule that binds to presynaptic neurexins to mediate both excitatory and inhibitory synapse formation. Promotes synapse development by acting as a cell adhesion molecule at the postsynaptic membrane, which associates with both neurexin-alpha and neurexin-beta proteins at the presynaptic membrane. Regulates the balance between excitatory and inhibitory synapses by inhibiting formation of excitatory parallel-fiber synapses and promoting formation of inhibitory synapses in the same neuron. May also be involved in ascorbate (vitamin C) uptake via its interaction with SLC23A2/SVCT2. Complex formation with APBA2 and APP, stabilizes APP metabolism and enhances APBA2-mediated suppression of beta-APP40 secretion, due to the retardation of intracellular APP maturation. Its function is as follows. Adipose-specific isoform that plays a key role in adaptive thermogenesis. Facilitates the efficient use of stored triglyceride by promoting multilocular morphology of thermogenic adipocytes: acts by inhibiting the activity of CIDEA and CIDEC on lipid droplets, thereby preventing lipid droplet fusion and facilitating lipid utilization. May also participate in adaptive thermogenesis by promoting sympathetic innervation of thermogenic adipose tissue: acts by driving secretion of neurotrophic factor S100B from brown adipocytes, stimulating neurite outgrowth from sympathetic neurons. The sequence is that of Calsyntenin-3 from Homo sapiens (Human).